The chain runs to 529 residues: Nuclear protein localization protein 4 homolog 1 (529 aa).

The 138-residue stretch at 129 to 266 folds into the MPN domain; the sequence is IQIENQELVN…ITEYSMDRHY (138 aa). The segment at 499 to 529 adopts a RanBP2-type zinc-finger fold; the sequence is SGGAVWNCGHCTFQNEAARQDCSMCGLPAAD.

It belongs to the NPL4 family. In terms of assembly, forms a complex composed of ubxn-3, ufd-1, npl-4.1 and cdc-48.1; within the complex, interacts with ufd-1 and ubxn-3. Interacts with ufd-1. Interacts with elc-1/elongin C; the interaction may mediate the interaction between the npl-4-ufd-1-cdc-48 complex and the E3 ubiquitin ligase cul-2 complex.

It localises to the cytoplasm. The protein localises to the nucleus. Its function is as follows. In association with ufd-1 and ATPase cdc-48.1 and/or cdc-48.2, involved in the cytoplasmic elimination of misfolded proteins exported from the ER. This pathway, known as ERAD, prevents the activation of the unfolded protein response (UPR) caused by the accumulation of misfolded proteins in the ER. During S phase and in association with ufd-1, cdc-48.1 and/or cdc-48.2 and ubxn-3, ensures the degradation of DNA licensing factor cdt-1 after the initiation of DNA replication and thus the disassembly of the DNA replication CGM helicase complex by promoting the dissociation from chromatin of several of its components including cdc-45 and sld-5. Regulates ubxn-3 nuclear localization during S phase. This chain is Nuclear protein localization protein 4 homolog 1, found in Caenorhabditis elegans.